The primary structure comprises 200 residues: Transcription factor FapR (200 aa).

This sequence belongs to the FapR family.

Its function is as follows. Transcriptional factor involved in regulation of membrane lipid biosynthesis by repressing genes involved in fatty acid and phospholipid metabolism. The protein is Transcription factor FapR of Caldanaerobacter subterraneus subsp. tengcongensis (strain DSM 15242 / JCM 11007 / NBRC 100824 / MB4) (Thermoanaerobacter tengcongensis).